A 447-amino-acid chain; its full sequence is Chorismate synthase, chloroplastic (447 aa).

The tract at residues 1–24 (MASSLSTKPFLSGSRRRSTTDGSG) is disordered. The N-terminal 57 residues, 1 to 57 (MASSLSTKPFLSGSRRRSTTDGSGWSYFQTSDLRQLSNQSVQISVRRQTAPLKLVVQ), are a transit peptide targeting the chloroplast.

Belongs to the chorismate synthase family. As to quaternary structure, homotetramer. FMNH2 is required as a cofactor. In terms of processing, the N-terminus is blocked.

Its subcellular location is the plastid. It is found in the chloroplast. It carries out the reaction 5-O-(1-carboxyvinyl)-3-phosphoshikimate = chorismate + phosphate. It functions in the pathway metabolic intermediate biosynthesis; chorismate biosynthesis; chorismate from D-erythrose 4-phosphate and phosphoenolpyruvate: step 7/7. In terms of biological role, catalyzes the last common step of the biosynthesis of aromatic amino acids, produced via the shikimic acid pathway. This is Chorismate synthase, chloroplastic from Capnoides sempervirens (Rock-harlequin).